The chain runs to 155 residues: SsrA-binding protein (155 aa).

This sequence belongs to the SmpB family.

Its subcellular location is the cytoplasm. In terms of biological role, required for rescue of stalled ribosomes mediated by trans-translation. Binds to transfer-messenger RNA (tmRNA), required for stable association of tmRNA with ribosomes. tmRNA and SmpB together mimic tRNA shape, replacing the anticodon stem-loop with SmpB. tmRNA is encoded by the ssrA gene; the 2 termini fold to resemble tRNA(Ala) and it encodes a 'tag peptide', a short internal open reading frame. During trans-translation Ala-aminoacylated tmRNA acts like a tRNA, entering the A-site of stalled ribosomes, displacing the stalled mRNA. The ribosome then switches to translate the ORF on the tmRNA; the nascent peptide is terminated with the 'tag peptide' encoded by the tmRNA and targeted for degradation. The ribosome is freed to recommence translation, which seems to be the essential function of trans-translation. This Ligilactobacillus salivarius (strain UCC118) (Lactobacillus salivarius) protein is SsrA-binding protein.